Consider the following 392-residue polypeptide: tRNA (guanine(26)-N(2)/guanine(27)-N(2))-dimethyltransferase (392 aa).

The 374-residue stretch at 2–375 (EIVQEGIAKI…LSFEEVMKKM (374 aa)) folds into the Trm1 methyltransferase domain. Arg-36, Arg-66, Asp-84, Glu-113, and Ala-114 together coordinate S-adenosyl-L-methionine. The Zn(2+) site is built by Cys-247, Cys-250, Cys-266, and Cys-269.

It belongs to the class I-like SAM-binding methyltransferase superfamily. Trm1 family.

The enzyme catalyses guanosine(26)/guanosine(27) in tRNA + 4 S-adenosyl-L-methionine = N(2)-dimethylguanosine(26)/N(2)-dimethylguanosine(27) in tRNA + 4 S-adenosyl-L-homocysteine + 4 H(+). In terms of biological role, dimethylates the guanine residues at position 26 and 27 of one or more tRNAs using S-adenosyl-L-methionine as donor of the methyl groups. In Aquifex aeolicus (strain VF5), this protein is tRNA (guanine(26)-N(2)/guanine(27)-N(2))-dimethyltransferase.